Reading from the N-terminus, the 352-residue chain is Popeye domain-containing protein 1 (352 aa).

At 1 to 38 (MSNTTSALPSSVPAVSLDPNATLCQDWEQSHHLLFHLA) the chain is on the extracellular side. Residues Asn3 and Asn20 are each glycosylated (N-linked (GlcNAc...) asparagine). The helical transmembrane segment at 39 to 59 (NLSLGLGFLIPTTLALHMIFL) threads the bilayer. Residue Arg60 is a topological domain, cytoplasmic. A helical transmembrane segment spans residues 61–81 (LLLMTGCSLFIAWATLYRCTL). Position 82 (Asp82) is a topological domain, extracellular. The chain crosses the membrane as a helical span at residues 83-103 (VMVWNVVFLLVNFMHFFFLLY). The Cytoplasmic segment spans residues 104-352 (KRRPIKIDRE…NVSKTTKKDI (249 aa)). Positions 299–352 (ILRGGSTGSSLQKNPLTKTSTTMKPIEEGLEDDVFESESPTTSQNVSKTTKKDI) are disordered. Polar residues-rich tracts occupy residues 306–321 (GSSL…STTM) and 336–346 (ESPTTSQNVSK).

Belongs to the popeye family. In terms of tissue distribution, expressed in skeletal muscle (at protein level).

Its subcellular location is the lateral cell membrane. It localises to the cell junction. The protein localises to the tight junction. The protein resides in the membrane. It is found in the cell membrane. Its subcellular location is the sarcolemma. It localises to the caveola. Functionally, cell adhesion molecule involved in the establishment and/or maintenance of cell integrity. Involved in skeletal muscle and heart development as well as in the maintenance of heart function. May play a role in vamp3-mediated vesicular transport and recycling of receptor molecules. Involved in the formation and regulation of the tight junction (TJ) paracellular permeability barrier in epithelial cells. May induce primordial adhesive contact and aggregation of epithelial cells in a Ca(2+)-independent manner. May be involved in epithelial movement during corneal sheet formation and regeneration. May play a role in the regulation of cell shape and movement by modulating the Rho-GTPase activity. May also be involved in striated muscle regeneration and in the regulation of cell spreading. In Danio rerio (Zebrafish), this protein is Popeye domain-containing protein 1 (popdc1).